Reading from the N-terminus, the 360-residue chain is Phosphate acyltransferase (360 aa).

Belongs to the PlsX family. Homodimer. Probably interacts with PlsY.

It is found in the cytoplasm. The enzyme catalyses a fatty acyl-[ACP] + phosphate = an acyl phosphate + holo-[ACP]. It participates in lipid metabolism; phospholipid metabolism. Catalyzes the reversible formation of acyl-phosphate (acyl-PO(4)) from acyl-[acyl-carrier-protein] (acyl-ACP). This enzyme utilizes acyl-ACP as fatty acyl donor, but not acyl-CoA. The polypeptide is Phosphate acyltransferase (Caulobacter vibrioides (strain ATCC 19089 / CIP 103742 / CB 15) (Caulobacter crescentus)).